The chain runs to 746 residues: Histone-lysine N-methyltransferase EZH2 (746 aa).

The interaction with DNMT1, DNMT3A and DNMT3B stretch occupies residues 1–340 (MGQTGKKSEK…AKEFAAALTA (340 aa)). Ser-21 is modified (phosphoserine; by PKB/AKT1). Residues 39 to 68 (KSMFSSNRQKILERTEILNQEWKQRRIQPV) form an interaction with EED region. An O-linked (GlcNAc) serine glycan is attached at Ser-75. Ser-76 is modified (phosphoserine). The tract at residues 180–222 (QYNDDDDDDDGDDPEEREEKQKDLEDHRDDKESRPPRKFPSDK) is disordered. Over residues 182–195 (NDDDDDDDGDDPEE) the composition is skewed to acidic residues. A compositionally biased stretch (basic and acidic residues) spans 196–222 (REEKQKDLEDHRDDKESRPPRKFPSDK). The interval 329–522 (EGAKEFAAAL…SSNHVYNYQP (194 aa)) is interaction with CDYL. Thr-339 carries the post-translational modification Phosphothreonine. The disordered stretch occupies residues 340–426 (AERIKTPPKR…PIKMKPNIEP (87 aa)). Position 345 is a phosphothreonine; by CDK1 and CDK2 (Thr-345). Basic residues predominate over residues 345–357 (TPPKRPGGRRRGR). Ser-363 and Ser-366 each carry phosphoserine. Thr-367 bears the Phosphothreonine mark. The span at 374–385 (ESKDTDSDREAG) shows a compositional bias: basic and acidic residues. At Thr-487 the chain carries Phosphothreonine. The region spanning 503–605 (CRKIQLKKDG…SKNVSCKNCS (103 aa)) is the CXC domain. The SET domain maps to 612–727 (KHLLLAPSDV…TGEELFFDYR (116 aa)). A Glycyl lysine isopeptide (Lys-Gly) (interchain with G-Cter in SUMO2) cross-link involves residue Lys-634.

Belongs to the class V-like SAM-binding methyltransferase superfamily. Histone-lysine methyltransferase family. EZ subfamily. As to quaternary structure, component of the PRC2/EED-EZH2 complex, which includes EED, EZH2, SUZ12, RBBP4 and RBBP7 and possibly AEBP2. The minimum components required for methyltransferase activity of the PRC2/EED-EZH2 complex are EED, EZH2 and SUZ12. The PRC2 complex may also interact with DNMT1, DNMT3A, DNMT3B and PHF1 via the EZH2 subunit and with SIRT1 via the SUZ12 subunit. Interacts with HDAC1 and HDAC2. Binds ATRX via the SET domain. Interacts with PRAME. Interacts with CDYL. Interacts with CLOCK, BMAL1 and CRY1. Interacts with DNMT3L; the interaction is direct. Interacts with EZHIP; the interaction blocks EZH2 methyltransferase activity. Interacts with ZNF263; recruited to the SIX3 promoter along with other proteins involved in chromatin modification and transcriptional corepression where it contributes to transcriptional repression. Interacts with ARMC12. Interacts with ZMYND8; the interaction is dependent on the presence of chromatin. Interacts with DDX18; this interaction inhibits the PRC2 complex. In terms of processing, phosphorylated by AKT1. Phosphorylation by AKT1 reduces methyltransferase activity. Phosphorylation at Thr-345 by CDK1 and CDK2 promotes maintenance of H3K27me3 levels at EZH2-target loci, thus leading to epigenetic gene silencing. Sumoylated. Post-translationally, glycosylated: O-GlcNAcylation at Ser-75 by OGT increases stability of EZH2 and facilitates the formation of H3K27me3 by the PRC2/EED-EZH2 complex. In the ovary, expressed in primordial follicles and oocytes and also in external follicle cells (at protein level). Expressed in many tissues. Overexpressed in numerous tumor types including carcinomas of the breast, colon, larynx, lymphoma and testis.

The protein resides in the nucleus. The catalysed reaction is L-lysyl(27)-[histone H3] + 3 S-adenosyl-L-methionine = N(6),N(6),N(6)-trimethyl-L-lysyl(27)-[histone H3] + 3 S-adenosyl-L-homocysteine + 3 H(+). In terms of biological role, polycomb group (PcG) protein. Catalytic subunit of the PRC2/EED-EZH2 complex, which methylates 'Lys-9' (H3K9me) and 'Lys-27' (H3K27me) of histone H3, leading to transcriptional repression of the affected target gene. Able to mono-, di- and trimethylate 'Lys-27' of histone H3 to form H3K27me1, H3K27me2 and H3K27me3, respectively. Displays a preference for substrates with less methylation, loses activity when progressively more methyl groups are incorporated into H3K27, H3K27me0 &gt; H3K27me1 &gt; H3K27me2. Compared to EZH1-containing complexes, it is more abundant in embryonic stem cells and plays a major role in forming H3K27me3, which is required for embryonic stem cell identity and proper differentiation. The PRC2/EED-EZH2 complex may also serve as a recruiting platform for DNA methyltransferases, thereby linking two epigenetic repression systems. Genes repressed by the PRC2/EED-EZH2 complex include HOXC8, HOXA9, MYT1, CDKN2A and retinoic acid target genes. EZH2 can also methylate non-histone proteins such as the transcription factor GATA4 and the nuclear receptor RORA. Regulates the circadian clock via histone methylation at the promoter of the circadian genes. Essential for the CRY1/2-mediated repression of the transcriptional activation of PER1/2 by the CLOCK-BMAL1 heterodimer; involved in the di and trimethylation of 'Lys-27' of histone H3 on PER1/2 promoters which is necessary for the CRY1/2 proteins to inhibit transcription. This is Histone-lysine N-methyltransferase EZH2 from Homo sapiens (Human).